A 337-amino-acid polypeptide reads, in one-letter code: Metacaspase III c (337 aa).

Propeptides lie at residues 1 to 6 (MGFLRR) and 116 to 125 (VPPAATGTRR). At C202 the chain carries Cysteine sulfenic acid (-SOH). C202 and C259 form a disulfide bridge. H207 is a catalytic residue. Positions 224, 240, and 241 each coordinate Ca(2+). The active site involves C264. D271 contributes to the Ca(2+) binding site. The propeptide occupies 290-337 (NFDFKKLLGKFGIDDFDKFGGEALGKINGDALGKVGKDALGKLNKFFG).

This sequence belongs to the peptidase C14B family. Auto-proteolytic cleavage into a large and a small subunit which probably remain associated by non-covalent bonds. Post-translationally, following oxidative stress, the oxidation of Cys-202 leads to the formation of a disulfide bond between Cys-202 and Cys-259 which enhances catalytic activity.

With respect to regulation, activated by Ca(2+). In terms of biological role, cysteine protease that cleaves specifically after arginine residues. In Phaeodactylum tricornutum (strain CCAP 1055/1), this protein is Metacaspase III c.